The following is a 562-amino-acid chain: Putative transport protein ECA2683 (562 aa).

The next 6 membrane-spanning stretches (helical) occupy residues 8–28 (LLNG…LCLG), 32–52 (LGPV…LLGQ), 66–86 (FMLF…SIFF), 93–113 (FMLA…LGKL), 116–136 (WGIG…PVLV), and 158–178 (HLSL…IFGA). RCK C-terminal domains are found at residues 202 to 288 (LDVD…NFRD) and 290 to 373 (KEVF…RIGF). Helical transmembrane passes span 383-403 (LLAF…TIQF), 406-426 (FTFG…LGFL), 447-467 (FGLM…INSS), 478-498 (SGLI…AYVL), and 537-557 (GTYA…VVIW).

Belongs to the AAE transporter (TC 2.A.81) family. YbjL subfamily.

Its subcellular location is the cell membrane. This is Putative transport protein ECA2683 from Pectobacterium atrosepticum (strain SCRI 1043 / ATCC BAA-672) (Erwinia carotovora subsp. atroseptica).